The primary structure comprises 214 residues: Thiamine-phosphate synthase (214 aa).

4-amino-2-methyl-5-(diphosphooxymethyl)pyrimidine contacts are provided by residues 37-41 and Asn73; that span reads QYREK. Mg(2+)-binding residues include Asp74 and Asp93. Ser112 serves as a coordination point for 4-amino-2-methyl-5-(diphosphooxymethyl)pyrimidine. Residue 139-141 coordinates 2-[(2R,5Z)-2-carboxy-4-methylthiazol-5(2H)-ylidene]ethyl phosphate; it reads TIS. Lys142 contacts 4-amino-2-methyl-5-(diphosphooxymethyl)pyrimidine. 2-[(2R,5Z)-2-carboxy-4-methylthiazol-5(2H)-ylidene]ethyl phosphate is bound by residues Gly171 and 191-192; that span reads IS.

This sequence belongs to the thiamine-phosphate synthase family. Mg(2+) is required as a cofactor.

It carries out the reaction 2-[(2R,5Z)-2-carboxy-4-methylthiazol-5(2H)-ylidene]ethyl phosphate + 4-amino-2-methyl-5-(diphosphooxymethyl)pyrimidine + 2 H(+) = thiamine phosphate + CO2 + diphosphate. The catalysed reaction is 2-(2-carboxy-4-methylthiazol-5-yl)ethyl phosphate + 4-amino-2-methyl-5-(diphosphooxymethyl)pyrimidine + 2 H(+) = thiamine phosphate + CO2 + diphosphate. The enzyme catalyses 4-methyl-5-(2-phosphooxyethyl)-thiazole + 4-amino-2-methyl-5-(diphosphooxymethyl)pyrimidine + H(+) = thiamine phosphate + diphosphate. The protein operates within cofactor biosynthesis; thiamine diphosphate biosynthesis; thiamine phosphate from 4-amino-2-methyl-5-diphosphomethylpyrimidine and 4-methyl-5-(2-phosphoethyl)-thiazole: step 1/1. Its function is as follows. Condenses 4-methyl-5-(beta-hydroxyethyl)thiazole monophosphate (THZ-P) and 2-methyl-4-amino-5-hydroxymethyl pyrimidine pyrophosphate (HMP-PP) to form thiamine monophosphate (TMP). In Listeria monocytogenes serovar 1/2a (strain ATCC BAA-679 / EGD-e), this protein is Thiamine-phosphate synthase.